The chain runs to 98 residues: Acylphosphatase (98 aa).

Residues 12 to 98 (TYYVRVRGVV…EKRFERFQQQ (87 aa)) form the Acylphosphatase-like domain. Active-site residues include Arg-27 and Asn-45.

Belongs to the acylphosphatase family.

It catalyses the reaction an acyl phosphate + H2O = a carboxylate + phosphate + H(+). This Burkholderia cenocepacia (strain HI2424) protein is Acylphosphatase (acyP).